Here is a 281-residue protein sequence, read N- to C-terminus: MLLSLLSMNINYNSITSIKQTLKEKKIAPRKLWGQNYLINENIRQKIIESLDIKENEKIWEIGPGLGAMTDILLKKTNLLTAFEIDLKYSEILNEKFGKLKNFKLIKGDFLKKYPNENKNIDKIFSNLPYNIASKVISKLIEENFLKEMVFTVQKELADRITAKINSKNYSSFTVLVQSHFTVIKIIDIGGNNFYPAPKVKSTTLKLIPKKHNIKDFKEFNKLIRTVFSSRRKKLKNTIINFITNKAILRENFLKEYLDKRPENISVEEFIQISNTLTAYH.

S-adenosyl-L-methionine is bound by residues Asn-36, Leu-38, Gly-63, Glu-84, Asp-109, and Asn-127.

Belongs to the class I-like SAM-binding methyltransferase superfamily. rRNA adenine N(6)-methyltransferase family. RsmA subfamily.

The protein localises to the cytoplasm. The catalysed reaction is adenosine(1518)/adenosine(1519) in 16S rRNA + 4 S-adenosyl-L-methionine = N(6)-dimethyladenosine(1518)/N(6)-dimethyladenosine(1519) in 16S rRNA + 4 S-adenosyl-L-homocysteine + 4 H(+). Its function is as follows. Specifically dimethylates two adjacent adenosines (A1518 and A1519) in the loop of a conserved hairpin near the 3'-end of 16S rRNA in the 30S particle. May play a critical role in biogenesis of 30S subunits. This Borreliella afzelii (strain PKo) (Borrelia afzelii) protein is Ribosomal RNA small subunit methyltransferase A.